The chain runs to 265 residues: 3-methyl-2-oxobutanoate hydroxymethyltransferase (265 aa).

Positions 45 and 84 each coordinate Mg(2+). Residues 45 to 46 (DS), Asp-84, and Lys-112 each bind 3-methyl-2-oxobutanoate. Glu-114 contributes to the Mg(2+) binding site. Catalysis depends on Glu-181, which acts as the Proton acceptor.

Belongs to the PanB family. Homodecamer; pentamer of dimers. Mg(2+) is required as a cofactor.

It is found in the cytoplasm. The catalysed reaction is 3-methyl-2-oxobutanoate + (6R)-5,10-methylene-5,6,7,8-tetrahydrofolate + H2O = 2-dehydropantoate + (6S)-5,6,7,8-tetrahydrofolate. Its pathway is cofactor biosynthesis; (R)-pantothenate biosynthesis; (R)-pantoate from 3-methyl-2-oxobutanoate: step 1/2. In terms of biological role, catalyzes the reversible reaction in which hydroxymethyl group from 5,10-methylenetetrahydrofolate is transferred onto alpha-ketoisovalerate to form ketopantoate. This chain is 3-methyl-2-oxobutanoate hydroxymethyltransferase, found in Pseudoalteromonas atlantica (strain T6c / ATCC BAA-1087).